Here is a 392-residue protein sequence, read N- to C-terminus: 8-amino-7-oxononanoate synthase (392 aa).

Position 21 (arginine 21) interacts with substrate. Residue 114 to 115 (GY) participates in pyridoxal 5'-phosphate binding. Residue histidine 139 coordinates substrate. Pyridoxal 5'-phosphate is bound by residues serine 187, 212–215 (DEAH), and 243–246 (TFGK). At lysine 246 the chain carries N6-(pyridoxal phosphate)lysine. Threonine 359 is a substrate binding site.

This sequence belongs to the class-II pyridoxal-phosphate-dependent aminotransferase family. BioF subfamily. In terms of assembly, homodimer. The cofactor is pyridoxal 5'-phosphate.

It catalyses the reaction 6-carboxyhexanoyl-[ACP] + L-alanine + H(+) = (8S)-8-amino-7-oxononanoate + holo-[ACP] + CO2. The protein operates within cofactor biosynthesis; biotin biosynthesis. Its function is as follows. Catalyzes the decarboxylative condensation of pimeloyl-[acyl-carrier protein] and L-alanine to produce 8-amino-7-oxononanoate (AON), [acyl-carrier protein], and carbon dioxide. This chain is 8-amino-7-oxononanoate synthase, found in Chlorobaculum parvum (strain DSM 263 / NCIMB 8327) (Chlorobium vibrioforme subsp. thiosulfatophilum).